A 264-amino-acid polypeptide reads, in one-letter code: Wtf element wtf11 (264 aa).

Over residues 1–12 (MNSNYVPLTSSV) the composition is skewed to polar residues. The segment at 1–26 (MNSNYVPLTSSVDVEEKMESENGVDL) is disordered. The next 4 helical transmembrane spans lie at 107-127 (LLFV…VIFG), 145-165 (LSWF…YDFW), 180-200 (WKNT…GFFV), and 217-237 (SLFA…FETL).

The protein belongs to the WTF family.

Its subcellular location is the membrane. Its function is as follows. May act in meiotic drive. This is Wtf element wtf11 from Schizosaccharomyces pombe (strain 972 / ATCC 24843) (Fission yeast).